The chain runs to 712 residues: NURS complex subunit red1 (712 aa).

The span at 1–22 shows a compositional bias: basic and acidic residues; it reads MSRSINLDELRKKALESKKKNE. Disordered regions lie at residues 1-71, 107-195, and 323-348; these read MSRS…DRFP, NKTF…TTNQ, and DDFS…GLTM. Positions 5–32 form a coiled coil; the sequence is INLDELRKKALESKKKNEEDESNDSDKE. Positions 23–42 are enriched in acidic residues; sequence EDESNDSDKEDGEISEDDPV. A compositionally biased stretch (low complexity) spans 130 to 141; sequence SETSDSSNTSQS. 2 stretches are compositionally biased toward polar residues: residues 178–193 and 327–348; these read FLST…SKTT and NSKI…GLTM. Residues 351-379 are a coiled coil; the sequence is SDYLALLRNKEEEIRRMTKLILRLESNKK. A disordered region spans residues 428–447; the sequence is PSISSSGASSSAATTNSDTT. Positions 471-501 form a coiled coil; that stretch reads AQIKKSEIDILNNLIEKEEGELTKYQTLVKS. Positions 545–567 are enriched in polar residues; that stretch reads QADENSSQILSSKTSNAPNGTTE. The tract at residues 545 to 568 is disordered; the sequence is QADENSSQILSSKTSNAPNGTTET. The segment at 618 to 639 adopts a C3H1-type zinc-finger fold; sequence FCKYETTGGVCNDDHCEASHFR.

In terms of assembly, interacts with mmi1, pla1 and rrp6.

It localises to the nucleus. In terms of biological role, promotes the exosome-mediated degradation of mRNAs containing a DSR (determinant of selective removal) signal sequence from mitotic cells. The chain is NURS complex subunit red1 from Schizosaccharomyces pombe (strain 972 / ATCC 24843) (Fission yeast).